The sequence spans 427 residues: Light-independent protochlorophyllide reductase subunit N (427 aa).

C28, C53, and C114 together coordinate [4Fe-4S] cluster.

This sequence belongs to the BchN/ChlN family. Protochlorophyllide reductase is composed of three subunits; BchL, BchN and BchB. Forms a heterotetramer of two BchB and two BchN subunits. [4Fe-4S] cluster serves as cofactor.

The catalysed reaction is chlorophyllide a + oxidized 2[4Fe-4S]-[ferredoxin] + 2 ADP + 2 phosphate = protochlorophyllide a + reduced 2[4Fe-4S]-[ferredoxin] + 2 ATP + 2 H2O. It participates in porphyrin-containing compound metabolism; bacteriochlorophyll biosynthesis (light-independent). Functionally, component of the dark-operative protochlorophyllide reductase (DPOR) that uses Mg-ATP and reduced ferredoxin to reduce ring D of protochlorophyllide (Pchlide) to form chlorophyllide a (Chlide). This reaction is light-independent. The NB-protein (BchN-BchB) is the catalytic component of the complex. The protein is Light-independent protochlorophyllide reductase subunit N of Dinoroseobacter shibae (strain DSM 16493 / NCIMB 14021 / DFL 12).